The chain runs to 145 residues: Large-conductance mechanosensitive channel (145 aa).

3 consecutive transmembrane segments (helical) span residues 10–30, 41–61, and 87–107; these read FALKGNVMDLAVGVIIGGAFA, IMPIVAFIAGGEINFKNMFLI, and GNFITVLINFLILAFIIFMMV.

It belongs to the MscL family. In terms of assembly, homopentamer.

Its subcellular location is the cell inner membrane. Its function is as follows. Channel that opens in response to stretch forces in the membrane lipid bilayer. May participate in the regulation of osmotic pressure changes within the cell. The chain is Large-conductance mechanosensitive channel from Psychrobacter arcticus (strain DSM 17307 / VKM B-2377 / 273-4).